The following is a 135-amino-acid chain: Ribosome-binding factor A (135 aa).

Belongs to the RbfA family. As to quaternary structure, monomer. Binds 30S ribosomal subunits, but not 50S ribosomal subunits or 70S ribosomes.

It is found in the cytoplasm. Functionally, one of several proteins that assist in the late maturation steps of the functional core of the 30S ribosomal subunit. Associates with free 30S ribosomal subunits (but not with 30S subunits that are part of 70S ribosomes or polysomes). Required for efficient processing of 16S rRNA. May interact with the 5'-terminal helix region of 16S rRNA. The protein is Ribosome-binding factor A of Aliivibrio fischeri (strain ATCC 700601 / ES114) (Vibrio fischeri).